A 90-amino-acid polypeptide reads, in one-letter code: Co-chaperonin GroES (90 aa).

Belongs to the GroES chaperonin family. Heptamer of 7 subunits arranged in a ring. Interacts with the chaperonin GroEL.

It is found in the cytoplasm. Its function is as follows. Together with the chaperonin GroEL, plays an essential role in assisting protein folding. The GroEL-GroES system forms a nano-cage that allows encapsulation of the non-native substrate proteins and provides a physical environment optimized to promote and accelerate protein folding. GroES binds to the apical surface of the GroEL ring, thereby capping the opening of the GroEL channel. This is Co-chaperonin GroES from Phocaeicola vulgatus (strain ATCC 8482 / DSM 1447 / JCM 5826 / CCUG 4940 / NBRC 14291 / NCTC 11154) (Bacteroides vulgatus).